Here is a 250-residue protein sequence, read N- to C-terminus: Small ribosomal subunit protein uS2 (250 aa).

Belongs to the universal ribosomal protein uS2 family.

The polypeptide is Small ribosomal subunit protein uS2 (Paraburkholderia xenovorans (strain LB400)).